The following is a 243-amino-acid chain: Sarcospan (243 aa).

Positions 1 to 43 (MGKNKQPRGQQRQGGPPAADAAGPDDMEPKKGTGAPKECGEEE) are disordered. The Cytoplasmic segment spans residues 1–53 (MGKNKQPRGQQRQGGPPAADAAGPDDMEPKKGTGAPKECGEEEPRTCCGCRFP). Residues 7 to 24 (PRGQQRQGGPPAADAAGP) show a composition bias toward low complexity. The chain crosses the membrane as a helical span at residues 54–74 (LLLALLQLALGIAVTVVGFLM). Over 75–86 (ASISSSLLVRDT) the chain is Extracellular. Residues 87–107 (PFWAGIIVCLVAYLGLFMLCV) traverse the membrane as a helical segment. Residues 108-122 (SYQVDERTCIQFSMK) lie on the Cytoplasmic side of the membrane. A helical transmembrane segment spans residues 123-143 (LLYFLLSALGLTVCVLAVAFA). The Extracellular portion of the chain corresponds to 144–193 (AHHYSQLTQFTCETTLDSCQCKLPSSEPLSRTFVYRDVTDCTSVTGTFKL). A helical membrane pass occupies residues 194–214 (FLLIQMILNLVCGLVCLLACF). The Cytoplasmic portion of the chain corresponds to 215-243 (VMWKHRYQVFYVGVRICSLTASEGPQQKI).

Isoform 1 is expressed exclusively in heart and skeletal muscle. Isoform 2 is expressed in heart, skeletal muscle, thymus, prostate, testis, ovary, small intestine, colon and spleen.

The protein resides in the cell membrane. The protein localises to the sarcolemma. Its subcellular location is the postsynaptic cell membrane. Functionally, component of the dystrophin-glycoprotein complex (DGC), a complex that spans the muscle plasma membrane and forms a link between the F-actin cytoskeleton and the extracellular matrix. Preferentially associates with the sarcoglycan subcomplex of the DGC. This is Sarcospan (SSPN) from Homo sapiens (Human).